A 478-amino-acid chain; its full sequence is Transposase for insertion sequence element IS231D (478 aa).

The protein belongs to the transposase 11 family.

Functionally, involved in the transposition of the insertion sequence. The polypeptide is Transposase for insertion sequence element IS231D (Bacillus thuringiensis subsp. finitimus).